Here is a 500-residue protein sequence, read N- to C-terminus: Glycerol kinase (500 aa).

Thr11 is a binding site for ADP. ATP contacts are provided by Thr11, Thr12, and Ser13. Thr11 serves as a coordination point for sn-glycerol 3-phosphate. Arg15 lines the ADP pocket. Sn-glycerol 3-phosphate contacts are provided by Arg81, Glu82, Tyr133, and Asp242. Residues Arg81, Glu82, Tyr133, Asp242, and Gln243 each coordinate glycerol. ADP is bound by residues Thr264 and Gly307. Residues Thr264, Gly307, Gln311, and Gly411 each contribute to the ATP site. Gly411 contributes to the ADP binding site.

Belongs to the FGGY kinase family.

It carries out the reaction glycerol + ATP = sn-glycerol 3-phosphate + ADP + H(+). Its pathway is polyol metabolism; glycerol degradation via glycerol kinase pathway; sn-glycerol 3-phosphate from glycerol: step 1/1. With respect to regulation, inhibited by fructose 1,6-bisphosphate (FBP). Functionally, key enzyme in the regulation of glycerol uptake and metabolism. Catalyzes the phosphorylation of glycerol to yield sn-glycerol 3-phosphate. The protein is Glycerol kinase of Bradyrhizobium sp. (strain BTAi1 / ATCC BAA-1182).